Reading from the N-terminus, the 1146-residue chain is DNA polymerase II large subunit (1146 aa).

It belongs to the archaeal DNA polymerase II family. In terms of assembly, heterodimer of a large subunit and a small subunit.

It catalyses the reaction DNA(n) + a 2'-deoxyribonucleoside 5'-triphosphate = DNA(n+1) + diphosphate. It carries out the reaction Exonucleolytic cleavage in the 3'- to 5'-direction to yield nucleoside 5'-phosphates.. Its function is as follows. Possesses two activities: a DNA synthesis (polymerase) and an exonucleolytic activity that degrades single-stranded DNA in the 3'- to 5'-direction. Has a template-primer preference which is characteristic of a replicative DNA polymerase. This is DNA polymerase II large subunit from Methanosarcina barkeri (strain Fusaro / DSM 804).